The sequence spans 255 residues: Ribonuclease PH (255 aa).

Phosphate-binding positions include R86 and 124-126 (GTR).

Belongs to the RNase PH family. Homohexameric ring arranged as a trimer of dimers.

It carries out the reaction tRNA(n+1) + phosphate = tRNA(n) + a ribonucleoside 5'-diphosphate. Phosphorolytic 3'-5' exoribonuclease that plays an important role in tRNA 3'-end maturation. Removes nucleotide residues following the 3'-CCA terminus of tRNAs; can also add nucleotides to the ends of RNA molecules by using nucleoside diphosphates as substrates, but this may not be physiologically important. Probably plays a role in initiation of 16S rRNA degradation (leading to ribosome degradation) during starvation. The sequence is that of Ribonuclease PH from Hydrogenobaculum sp. (strain Y04AAS1).